The following is a 205-amino-acid chain: Pyrrolidone-carboxylate peptidase (205 aa).

Active-site residues include Glu79, Cys142, and His165.

This sequence belongs to the peptidase C15 family. Homotetramer.

The protein localises to the cytoplasm. It catalyses the reaction Release of an N-terminal pyroglutamyl group from a polypeptide, the second amino acid generally not being Pro.. Removes 5-oxoproline from various penultimate amino acid residues except L-proline. In Gloeobacter violaceus (strain ATCC 29082 / PCC 7421), this protein is Pyrrolidone-carboxylate peptidase.